The sequence spans 283 residues: Protein canopy homolog 3 (283 aa).

Residues 1–35 form the signal peptide; that stretch reads MEPLPEPTSRPRLRPRPRCLLLLPLLLLLLLLLPA. The Saposin B-type domain maps to 55-276; it reads SKCEVCKYVA…EGIQKASPLT (222 aa). N-linked (GlcNAc...) asparagine glycosylation occurs at Asn-161. Positions 161-187 form a coiled coil; it reads NETSAEVADLKKQCDVLVEEFEEVIED. The disordered stretch occupies residues 223–283; sequence KGDTAALGGK…PLTHSPPDEL (61 aa).

It belongs to the canopy family. As to quaternary structure, interacts with HSP90B1; this interaction is disrupted in the presence of ATP. Interacts with TLR1, TLR2, TLR4 and TLR9.

It is found in the endoplasmic reticulum. In terms of biological role, toll-like receptor (TLR)-specific co-chaperone for HSP90B1. Required for proper TLR folding, except that of TLR3, and hence controls TLR exit from the endoplasmic reticulum. Consequently, required for both innate and adaptive immune responses. This is Protein canopy homolog 3 (CNPY3) from Sus scrofa (Pig).